The following is a 631-amino-acid chain: tRNA uridine 5-carboxymethylaminomethyl modification enzyme MnmG (631 aa).

15–20 (GAGHAG) provides a ligand contact to FAD. Residues 203–232 (TPPRVDGNTVDYSKTQEEPGDKEPRHFSYT) are disordered. Residues 216-232 (KTQEEPGDKEPRHFSYT) are compositionally biased toward basic and acidic residues. 276–290 (GPRYCPSIEDKVVRF) is an NAD(+) binding site.

Belongs to the MnmG family. As to quaternary structure, homodimer. Heterotetramer of two MnmE and two MnmG subunits. FAD serves as cofactor.

It localises to the cytoplasm. In terms of biological role, NAD-binding protein involved in the addition of a carboxymethylaminomethyl (cmnm) group at the wobble position (U34) of certain tRNAs, forming tRNA-cmnm(5)s(2)U34. This Lactobacillus gasseri (strain ATCC 33323 / DSM 20243 / BCRC 14619 / CIP 102991 / JCM 1131 / KCTC 3163 / NCIMB 11718 / NCTC 13722 / AM63) protein is tRNA uridine 5-carboxymethylaminomethyl modification enzyme MnmG.